The chain runs to 64 residues: Large ribosomal subunit protein uL29 (64 aa).

The protein belongs to the universal ribosomal protein uL29 family.

This Synechococcus elongatus (strain ATCC 33912 / PCC 7942 / FACHB-805) (Anacystis nidulans R2) protein is Large ribosomal subunit protein uL29.